We begin with the raw amino-acid sequence, 117 residues long: Fluoride-specific ion channel FluC 2 (117 aa).

4 helical membrane-spanning segments follow: residues 1–21, 33–53, 61–81, and 94–114; these read MITI…RALI, IPIA…FMMG, MFPF…TLSS, and IRFV…CFYG. Na(+)-binding residues include Gly-71 and Thr-74.

This sequence belongs to the fluoride channel Fluc/FEX (TC 1.A.43) family.

The protein resides in the cell membrane. The enzyme catalyses fluoride(in) = fluoride(out). Na(+) is not transported, but it plays an essential structural role and its presence is essential for fluoride channel function. In terms of biological role, fluoride-specific ion channel. Important for reducing fluoride concentration in the cell, thus reducing its toxicity. The chain is Fluoride-specific ion channel FluC 2 from Staphylococcus epidermidis (strain ATCC 35984 / DSM 28319 / BCRC 17069 / CCUG 31568 / BM 3577 / RP62A).